Reading from the N-terminus, the 398-residue chain is Bifunctional enzyme IspD/IspF (398 aa).

The interval 1-234 (MTNSPRTAAI…SRLMAALGDI (234 aa)) is 2-C-methyl-D-erythritol 4-phosphate cytidylyltransferase. Residues 235 to 398 (RTGTGYDVHA…LPWGADGLAG (164 aa)) form a 2-C-methyl-D-erythritol 2,4-cyclodiphosphate synthase region. Aspartate 241 and histidine 243 together coordinate a divalent metal cation. 4-CDP-2-C-methyl-D-erythritol 2-phosphate contacts are provided by residues 241-243 (DVH) and 267-268 (HS). Position 275 (histidine 275) interacts with a divalent metal cation. 4-CDP-2-C-methyl-D-erythritol 2-phosphate is bound by residues 289–291 (DIG), 365–368 (TTSE), phenylalanine 372, and arginine 375.

This sequence in the N-terminal section; belongs to the IspD/TarI cytidylyltransferase family. IspD subfamily. It in the C-terminal section; belongs to the IspF family. Requires a divalent metal cation as cofactor.

It catalyses the reaction 2-C-methyl-D-erythritol 4-phosphate + CTP + H(+) = 4-CDP-2-C-methyl-D-erythritol + diphosphate. The enzyme catalyses 4-CDP-2-C-methyl-D-erythritol 2-phosphate = 2-C-methyl-D-erythritol 2,4-cyclic diphosphate + CMP. It participates in isoprenoid biosynthesis; isopentenyl diphosphate biosynthesis via DXP pathway; isopentenyl diphosphate from 1-deoxy-D-xylulose 5-phosphate: step 2/6. The protein operates within isoprenoid biosynthesis; isopentenyl diphosphate biosynthesis via DXP pathway; isopentenyl diphosphate from 1-deoxy-D-xylulose 5-phosphate: step 4/6. In terms of biological role, bifunctional enzyme that catalyzes the formation of 4-diphosphocytidyl-2-C-methyl-D-erythritol from CTP and 2-C-methyl-D-erythritol 4-phosphate (MEP) (IspD), and catalyzes the conversion of 4-diphosphocytidyl-2-C-methyl-D-erythritol 2-phosphate (CDP-ME2P) to 2-C-methyl-D-erythritol 2,4-cyclodiphosphate (ME-CPP) with a corresponding release of cytidine 5-monophosphate (CMP) (IspF). In Rhodopseudomonas palustris (strain TIE-1), this protein is Bifunctional enzyme IspD/IspF.